An 846-amino-acid polypeptide reads, in one-letter code: Translation initiation factor IF-2 (846 aa).

The interval 198–219 (YKREEEEKKSKAKKAGGKGFKK) is disordered. The span at 207-219 (SKAKKAGGKGFKK) shows a compositional bias: basic residues. One can recognise a tr-type G domain in the interval 345–512 (SRAPVVTIMG…AVLLQSEVLE (168 aa)). The segment at 354–361 (GHVDHGKT) is G1. 354–361 (GHVDHGKT) is a GTP binding site. The G2 stretch occupies residues 379–383 (GITQH). The segment at 400–403 (DTPG) is G3. GTP-binding positions include 400–404 (DTPGH) and 454–457 (NKID). The tract at residues 454-457 (NKID) is G4. Residues 490–492 (SAK) form a G5 region.

This sequence belongs to the TRAFAC class translation factor GTPase superfamily. Classic translation factor GTPase family. IF-2 subfamily.

It localises to the cytoplasm. One of the essential components for the initiation of protein synthesis. Protects formylmethionyl-tRNA from spontaneous hydrolysis and promotes its binding to the 30S ribosomal subunits. Also involved in the hydrolysis of GTP during the formation of the 70S ribosomal complex. The sequence is that of Translation initiation factor IF-2 from Francisella tularensis subsp. novicida (strain U112).